A 176-amino-acid chain; its full sequence is Ribosome rescue factor SmrB (176 aa).

Residues 93–168 (LDLHGYRQSE…GDAALLVLID (76 aa)) form the Smr domain.

It belongs to the SmrB family. Associates with collided ribosomes, but not with correctly translating polysomes.

In terms of biological role, acts as a ribosome collision sensor. Detects stalled/collided disomes (pairs of ribosomes where the leading ribosome is stalled and a second ribosome has collided with it) and endonucleolytically cleaves mRNA at the 5' boundary of the stalled ribosome. Stalled/collided disomes form a new interface (primarily via the 30S subunits) that binds SmrB. Cleaved mRNA becomes available for tmRNA ligation, leading to ribosomal subunit dissociation and rescue of stalled ribosomes. The chain is Ribosome rescue factor SmrB from Shewanella baltica (strain OS195).